The primary structure comprises 485 residues: Glutamyl-tRNA(Gln) amidotransferase subunit A (485 aa).

Catalysis depends on charge relay system residues lysine 75 and serine 150. The active-site Acyl-ester intermediate is serine 174.

Belongs to the amidase family. GatA subfamily. Heterotrimer of A, B and C subunits.

The catalysed reaction is L-glutamyl-tRNA(Gln) + L-glutamine + ATP + H2O = L-glutaminyl-tRNA(Gln) + L-glutamate + ADP + phosphate + H(+). Allows the formation of correctly charged Gln-tRNA(Gln) through the transamidation of misacylated Glu-tRNA(Gln) in organisms which lack glutaminyl-tRNA synthetase. The reaction takes place in the presence of glutamine and ATP through an activated gamma-phospho-Glu-tRNA(Gln). The protein is Glutamyl-tRNA(Gln) amidotransferase subunit A of Picosynechococcus sp. (strain ATCC 27264 / PCC 7002 / PR-6) (Agmenellum quadruplicatum).